Consider the following 197-residue polypeptide: Adenylyl-sulfate kinase (197 aa).

Position 33 to 40 (33 to 40 (GLSGSGKS)) interacts with ATP. Ser107 acts as the Phosphoserine intermediate in catalysis.

Belongs to the APS kinase family.

The enzyme catalyses adenosine 5'-phosphosulfate + ATP = 3'-phosphoadenylyl sulfate + ADP + H(+). Its pathway is sulfur metabolism; hydrogen sulfide biosynthesis; sulfite from sulfate: step 2/3. Its function is as follows. Catalyzes the synthesis of activated sulfate. The sequence is that of Adenylyl-sulfate kinase from Bacillus licheniformis (strain ATCC 14580 / DSM 13 / JCM 2505 / CCUG 7422 / NBRC 12200 / NCIMB 9375 / NCTC 10341 / NRRL NRS-1264 / Gibson 46).